The primary structure comprises 412 residues: Argininosuccinate synthase (412 aa).

Residues A15–S23 and A42 contribute to the ATP site. Residues Y93 and S98 each coordinate L-citrulline. G123 is an ATP binding site. Residues T125, N129, and D130 each contribute to the L-aspartate site. L-citrulline is bound at residue N129. Residues R133, S185, S194, E270, and Y282 each contribute to the L-citrulline site.

The protein belongs to the argininosuccinate synthase family. Type 1 subfamily. As to quaternary structure, homotetramer.

The protein localises to the cytoplasm. It catalyses the reaction L-citrulline + L-aspartate + ATP = 2-(N(omega)-L-arginino)succinate + AMP + diphosphate + H(+). Its pathway is amino-acid biosynthesis; L-arginine biosynthesis; L-arginine from L-ornithine and carbamoyl phosphate: step 2/3. The protein is Argininosuccinate synthase of Psychrobacter cryohalolentis (strain ATCC BAA-1226 / DSM 17306 / VKM B-2378 / K5).